Here is a 408-residue protein sequence, read N- to C-terminus: CinA-like protein (408 aa).

Belongs to the CinA family.

The polypeptide is CinA-like protein (Thermotoga sp. (strain RQ2)).